The chain runs to 97 residues: Ferredoxin-like protein YdiT (97 aa).

It belongs to the bacterial-type ferredoxin family. FixX subfamily.

Functionally, could be a 3Fe-4S cluster-containing protein. Probably participates in a redox process with YdiQ, YdiR and YdiS. The polypeptide is Ferredoxin-like protein YdiT (ydiT) (Escherichia coli (strain K12)).